The chain runs to 110 residues: Nucleoid-associated protein ESA_02800 (110 aa).

The interval 89–110 (QKEKMASVSSGMQLPPGFKMPF) is disordered.

Belongs to the YbaB/EbfC family. In terms of assembly, homodimer.

Its subcellular location is the cytoplasm. It localises to the nucleoid. In terms of biological role, binds to DNA and alters its conformation. May be involved in regulation of gene expression, nucleoid organization and DNA protection. This chain is Nucleoid-associated protein ESA_02800, found in Cronobacter sakazakii (strain ATCC BAA-894) (Enterobacter sakazakii).